The following is a 739-amino-acid chain: G2 and S phase-expressed protein 1 (739 aa).

Positions 1–11 are enriched in basic and acidic residues; sequence MEGGGGRDEPS. The disordered stretch occupies residues 1–20; the sequence is MEGGGGRDEPSACRAGDVNM. Residue Ser91 is modified to Phosphoserine. 3 disordered regions span residues 116–136, 149–306, and 320–639; these read SRNQ…GVER, EKEK…AIPV, and PGST…GDAA. The span at 149–165 shows a compositional bias: basic and acidic residues; the sequence is EKEKEMKKSPTSLKRET. Ser157 carries the post-translational modification Phosphoserine. A Phosphothreonine modification is found at Thr159. Residues Ser171, Ser187, Ser208, Ser247, and Ser262 each carry the phosphoserine modification. Over residues 181–195 the composition is skewed to low complexity; it reads PRLLASSPALPSSGA. Basic and acidic residues predominate over residues 268 to 280; sequence IPAEKESHRDVLP. 2 stretches are compositionally biased toward low complexity: residues 284–294 and 330–342; these read APGAVNVPAAG and SSSG…ASSA. Ser331 carries the post-translational modification Phosphoserine. A compositionally biased stretch (polar residues) spans 360 to 372; that stretch reads PANSSRPLSNISK. Residues 411 to 424 are compositionally biased toward low complexity; it reads TAPPSASPTQPQTP. 2 stretches are compositionally biased toward polar residues: residues 430 to 446 and 455 to 470; these read WLNS…LNKT and CLNS…TNQF. Ser480 is subject to Phosphoserine. The segment covering 481 to 522 has biased composition (polar residues); sequence PDSSTPKLSRAQRPQSCTSVGRVTVHSTPVRRSSGPAPQSLL. Thr485 carries the phosphothreonine modification. A phosphoserine mark is found at Ser496, Ser499, Ser514, Ser520, Ser523, and Ser528. Residue Thr532 is modified to Phosphothreonine. Phosphoserine is present on residues Ser535 and Ser555. Basic and acidic residues predominate over residues 577–590; that stretch reads EPTRESNRKTDSRL. 2 positions are modified to phosphoserine: Ser594 and Ser611. A Phosphothreonine modification is found at Thr696. A phosphoserine mark is found at Ser707, Ser717, Ser718, Ser724, and Ser734.

Phosphorylated in mitosis.

The protein localises to the cytoplasm. The protein resides in the cytoskeleton. In terms of biological role, may be involved in p53-induced cell cycle arrest in G2/M phase by interfering with microtubule rearrangements that are required to enter mitosis. Overexpression delays G2/M phase progression. The protein is G2 and S phase-expressed protein 1 of Homo sapiens (Human).